We begin with the raw amino-acid sequence, 150 residues long: UPF0540 protein At1g62080 (150 aa).

Positions methionine 1–alanine 21 are cleaved as a signal peptide. Low complexity predominate over residues alanine 119 to lysine 135. Residues alanine 119–aspartate 150 are disordered.

It belongs to the UPF0540 family.

This is UPF0540 protein At1g62080 from Arabidopsis thaliana (Mouse-ear cress).